Consider the following 294-residue polypeptide: Cytidine deaminase (294 aa).

CMP/dCMP-type deaminase domains lie at D48 to K168 and L186 to G294. N89 to E91 is a binding site for substrate. A Zn(2+)-binding site is contributed by H102. The Proton donor role is filled by E104. Residues C129 and C132 each coordinate Zn(2+).

It belongs to the cytidine and deoxycytidylate deaminase family. Homodimer. Zn(2+) serves as cofactor.

It carries out the reaction cytidine + H2O + H(+) = uridine + NH4(+). The enzyme catalyses 2'-deoxycytidine + H2O + H(+) = 2'-deoxyuridine + NH4(+). This enzyme scavenges exogenous and endogenous cytidine and 2'-deoxycytidine for UMP synthesis. The polypeptide is Cytidine deaminase (Salmonella dublin (strain CT_02021853)).